A 483-amino-acid chain; its full sequence is Cobyric acid synthase (483 aa).

A GATase cobBQ-type domain is found at 251 to 438; sequence SLVVAVPMLP…LHGVFNADEF (188 aa). The Nucleophile role is filled by Cys333. His430 is an active-site residue.

The protein belongs to the CobB/CobQ family. CobQ subfamily.

It participates in cofactor biosynthesis; adenosylcobalamin biosynthesis. Functionally, catalyzes amidations at positions B, D, E, and G on adenosylcobyrinic A,C-diamide. NH(2) groups are provided by glutamine, and one molecule of ATP is hydrogenolyzed for each amidation. This is Cobyric acid synthase from Brucella anthropi (strain ATCC 49188 / DSM 6882 / CCUG 24695 / JCM 21032 / LMG 3331 / NBRC 15819 / NCTC 12168 / Alc 37) (Ochrobactrum anthropi).